Reading from the N-terminus, the 366-residue chain is UDP-N-acetylenolpyruvoylglucosamine reductase (366 aa).

An FAD-binding PCMH-type domain is found at 29–203 (VGPVARTLVT…LEVEFALDAS (175 aa)). The active site involves Arg-177. The active-site Proton donor is the Ser-258. Residue Glu-358 is part of the active site.

The protein belongs to the MurB family. The cofactor is FAD.

Its subcellular location is the cytoplasm. It carries out the reaction UDP-N-acetyl-alpha-D-muramate + NADP(+) = UDP-N-acetyl-3-O-(1-carboxyvinyl)-alpha-D-glucosamine + NADPH + H(+). The protein operates within cell wall biogenesis; peptidoglycan biosynthesis. Functionally, cell wall formation. This chain is UDP-N-acetylenolpyruvoylglucosamine reductase, found in Mycobacterium marinum (strain ATCC BAA-535 / M).